A 409-amino-acid polypeptide reads, in one-letter code: Sperm equatorial segment protein 1 (409 aa).

The first 18 residues, 1–18 (MKPVVLVALLWLWPSSFL), serve as a signal peptide directing secretion. An N-linked (GlcNAc...) asparagine glycan is attached at Asn-132. The tract at residues 141-223 (EPYIEKEPEP…TTNTQGTPNT (83 aa)) is disordered. Acidic residues predominate over residues 167–177 (PEPEPESESAP). Residues 198-208 (NKVRTGTSRMS) show a composition bias toward polar residues. Residues 209-223 (TVITQTTNTQGTPNT) are compositionally biased toward low complexity.

This sequence belongs to the SPESP1 family. Post-translationally, glycosylated. In testis there are two predominant forms of 77- and 67-kDa and a form of 47-kDa, whereas in epididymal sperm from caput, corpus, and cauda there are two forms of 47- and 43-kDa. Testis forms contain complex carbohydrate residues. Epididymal sperm forms are N-glycosylated. Then undergoes significant glycosylation in the testis and that the majority of these glycoconjugates are removed by the time sperm reach the caput epididymis.

The protein localises to the cytoplasmic vesicle. Its subcellular location is the secretory vesicle. It is found in the acrosome. In terms of biological role, involved in fertilization ability of sperm. This is Sperm equatorial segment protein 1 from Rattus norvegicus (Rat).